A 274-amino-acid polypeptide reads, in one-letter code: Large ribosomal subunit protein uL2cz/uL2cy (274 aa).

Disordered regions lie at residues 1–21 (MAIH…VDSQ) and 224–252 (NPVD…GYPA).

The protein belongs to the universal ribosomal protein uL2 family. Part of the 50S ribosomal subunit.

The protein resides in the plastid. The protein localises to the chloroplast. The polypeptide is Large ribosomal subunit protein uL2cz/uL2cy (rpl2-A) (Olimarabidopsis pumila (Dwarf rocket)).